A 201-amino-acid polypeptide reads, in one-letter code: Dephospho-CoA kinase (201 aa).

A DPCK domain is found at 4-201 (TIGLTGGIAS…ILKQWDALEK (198 aa)). 12-17 (ASGKST) serves as a coordination point for ATP.

This sequence belongs to the CoaE family.

It is found in the cytoplasm. It catalyses the reaction 3'-dephospho-CoA + ATP = ADP + CoA + H(+). It participates in cofactor biosynthesis; coenzyme A biosynthesis; CoA from (R)-pantothenate: step 5/5. Functionally, catalyzes the phosphorylation of the 3'-hydroxyl group of dephosphocoenzyme A to form coenzyme A. The protein is Dephospho-CoA kinase of Geobacillus kaustophilus (strain HTA426).